Reading from the N-terminus, the 255-residue chain is Small ribosomal subunit protein eS4 (255 aa).

The 64-residue stretch at 44 to 107 (IPLLILVRDV…DEYYRMIPYP (64 aa)) folds into the S4 RNA-binding domain.

The protein belongs to the eukaryotic ribosomal protein eS4 family.

The chain is Small ribosomal subunit protein eS4 from Ignicoccus hospitalis (strain KIN4/I / DSM 18386 / JCM 14125).